Reading from the N-terminus, the 1104-residue chain is Carbamoyl phosphate synthase large chain (1104 aa).

The tract at residues 1-403 (MPRRQDIQKI…SFQKALRSLE (403 aa)) is carboxyphosphate synthetic domain. The ATP site is built by arginine 129, arginine 170, glycine 176, glycine 177, glutamine 209, leucine 211, glutamate 216, glycine 242, isoleucine 243, histidine 244, glutamine 286, and glutamate 300. An ATP-grasp 1 domain is found at 133 to 329 (NEAMDKIGVK…IAKMAAKLAV (197 aa)). 3 residues coordinate Mg(2+): glutamine 286, glutamate 300, and asparagine 302. Residues glutamine 286, glutamate 300, and asparagine 302 each contribute to the Mn(2+) site. The oligomerization domain stretch occupies residues 404-552 (TGRAGWGCDK…YSTYEEETEV (149 aa)). The interval 553–966 (IPASKPKVMI…AFAKAELGAG (414 aa)) is carbamoyl phosphate synthetic domain. Residues 703–900 (EKILQKLNIS…LAKLASLIMS (198 aa)) enclose the ATP-grasp 2 domain. Residues arginine 739, lysine 778, leucine 780, glutamate 785, glycine 811, isoleucine 812, histidine 813, serine 814, glutamine 854, and glutamate 871 each coordinate ATP. Mg(2+) is bound by residues glutamine 854, glutamate 871, and asparagine 873. Residues glutamine 854, glutamate 871, and asparagine 873 each contribute to the Mn(2+) site. An MGS-like domain is found at 967 to 1104 (ERLPLTGTVF…KTIQEYCPNF (138 aa)). The interval 967-1104 (ERLPLTGTVF…KTIQEYCPNF (138 aa)) is allosteric domain.

Belongs to the CarB family. As to quaternary structure, composed of two chains; the small (or glutamine) chain promotes the hydrolysis of glutamine to ammonia, which is used by the large (or ammonia) chain to synthesize carbamoyl phosphate. Tetramer of heterodimers (alpha,beta)4. Mg(2+) is required as a cofactor. Mn(2+) serves as cofactor.

It carries out the reaction hydrogencarbonate + L-glutamine + 2 ATP + H2O = carbamoyl phosphate + L-glutamate + 2 ADP + phosphate + 2 H(+). The catalysed reaction is hydrogencarbonate + NH4(+) + 2 ATP = carbamoyl phosphate + 2 ADP + phosphate + 2 H(+). It functions in the pathway amino-acid biosynthesis; L-arginine biosynthesis; carbamoyl phosphate from bicarbonate: step 1/1. It participates in pyrimidine metabolism; UMP biosynthesis via de novo pathway; (S)-dihydroorotate from bicarbonate: step 1/3. Functionally, large subunit of the glutamine-dependent carbamoyl phosphate synthetase (CPSase). CPSase catalyzes the formation of carbamoyl phosphate from the ammonia moiety of glutamine, carbonate, and phosphate donated by ATP, constituting the first step of 2 biosynthetic pathways, one leading to arginine and/or urea and the other to pyrimidine nucleotides. The large subunit (synthetase) binds the substrates ammonia (free or transferred from glutamine from the small subunit), hydrogencarbonate and ATP and carries out an ATP-coupled ligase reaction, activating hydrogencarbonate by forming carboxy phosphate which reacts with ammonia to form carbamoyl phosphate. The sequence is that of Carbamoyl phosphate synthase large chain from Nostoc sp. (strain PCC 7120 / SAG 25.82 / UTEX 2576).